The following is a 641-amino-acid chain: Uromodulin (641 aa).

Residues Met-1 to Thr-24 form the signal peptide. A glycan (N-linked (GlcNAc...) asparagine) is linked at Asn-25. In terms of domain architecture, EGF-like 1 spans Glu-28–Val-64. 21 disulfides stabilise this stretch: Cys-32-Cys-41, Cys-35-Cys-50, Cys-52-Cys-63, Cys-69-Cys-83, Cys-77-Cys-92, Cys-94-Cys-106, Cys-112-Cys-126, Cys-120-Cys-135, Cys-137-Cys-148, Cys-150-Cys-161, Cys-155-Cys-170, Cys-174-Cys-267, Cys-195-Cys-282, Cys-217-Cys-255, Cys-223-Cys-287, Cys-248-Cys-256, Cys-297-Cys-306, Cys-300-Cys-315, Cys-317-Cys-347, Cys-335-Cys-425, and Cys-366-Cys-389. Positions Asp-65–Thr-107 constitute an EGF-like 2; calcium-binding domain. The N-linked (GlcNAc...) asparagine glycan is linked to Asn-76. Residues Asp-108 to Glu-149 form the EGF-like 3; calcium-binding domain. Residues Cys-150–Ala-171 form a beta hairpin region. Residues Asp-172–Ser-291 are D10C. N-linked (GlcNAc...) asparagine glycosylation occurs at Asn-232. An N-linked (GlcNAc...) asparagine glycan is attached at Asn-275. Residues Ser-292 to Ile-323 enclose the EGF-like 4 domain. A glycan (N-linked (GlcNAc...) asparagine) is linked at Asn-322. Residues Glu-334–Leu-429 form a ZP-N region. A ZP domain is found at Glu-334–Ser-589. Residues Asp-430 to Thr-453 are flexible ZP-N/ZP-C linker; important for secretion and polymerization into filaments. N-linked (GlcNAc...) asparagine glycosylation is present at Asn-447. Residues Gly-454–Gln-464 form an internal hydrophobic patch (IHP) region. A ZP-C region spans residues Gly-454–Ser-589. 3 disulfides stabilise this stretch: Cys-506-Cys-566, Cys-527-Cys-582, and Cys-571-Cys-578. An essential for cleavage by HPN region spans residues Arg-586–Ser-589. An external hydrophobic patch (EHP); regulates polymerization into filaments region spans residues Val-598 to Arg-606. The GPI-anchor amidated serine moiety is linked to residue Ser-614. A propeptide spans Arg-615 to Gln-641 (removed in mature form).

In terms of assembly, homodimer that then polymerizes into long filaments. The filaments can additionally assemble laterally to form a sheet. The filaments consist of a zigzag-shaped backbone with laterally protruding arms which interact with bacterial adhesin fimH. Two fimH molecules can bind to a single UMOD monomer. Post-translationally, N-glycosylated. In terms of processing, proteolytically cleaved at a conserved C-terminal proteolytic cleavage site to generate the secreted form found in urine. This cleavage is catalyzed by HPN.

The protein resides in the apical cell membrane. It localises to the basolateral cell membrane. The protein localises to the cell projection. Its subcellular location is the cilium membrane. It is found in the secreted. In terms of biological role, functions in biogenesis and organization of the apical membrane of epithelial cells of the thick ascending limb of Henle's loop (TALH), where it promotes formation of complex filamentous gel-like structure that may play a role in the water barrier permeability. May serve as a receptor for binding and endocytosis of cytokines (IL-1, IL-2) and TNF. Facilitates neutrophil migration across renal epithelia. Functionally, in the urine, may contribute to colloid osmotic pressure, retards passage of positively charged electrolytes, and inhibits formation of liquid containing supersaturated salts and subsequent formation of salt crystals. Protects against urinary tract infections by binding to type 1 fimbriated E.coli. Binds to bacterial adhesin fimH which mediates the stable formation of bacterial aggregates, prevents the binding of E.coli to uroplakins UPK1A and UPK1B which act as urothelial receptors for type I fimbriae, and allows for pathogen clearance through micturation. Also promotes aggregation of other bacteria including K.pneumoniae, P.aeruginosa and S.mitis and so may also protect against other uropathogens. The protein is Uromodulin (UMOD) of Pongo abelii (Sumatran orangutan).